The primary structure comprises 274 residues: Copper chaperone for superoxide dismutase (274 aa).

The 64-residue stretch at 11 to 74 (LCTLEFAVQM…LLEGTGRQAV (64 aa)) folds into the HMA domain. Residues Cys-22 and Cys-25 each contribute to the Cu cation site. Lys-76 participates in a covalent cross-link: Glycyl lysine isopeptide (Lys-Gly) (interchain with G-Cter in ubiquitin). A superoxide dismutase-like region spans residues 88–234 (AAVAILGGPG…LACGIIARSA (147 aa)). Cys-141 and Cys-227 are joined by a disulfide. His-147, His-155, His-164, and Asp-167 together coordinate Zn(2+). Residues Lys-189, Lys-216, and Lys-241 each participate in a glycyl lysine isopeptide (Lys-Gly) (interchain with G-Cter in ubiquitin) cross-link. Positions 244 and 246 each coordinate Cu cation. At Ser-267 the chain carries Phosphoserine.

In the C-terminal section; belongs to the Cu-Zn superoxide dismutase family. Homodimer, and heterodimer with SOD1. Interacts with COMMD1. Interacts with XIAP/BIRC4. Interacts with SLC31A1(via C-terminal domain); this interaction is Cu(1+)-mediated. The heterodimer CCS:SOD1 interacts with SLC31A1; this heterotrimer is Cu(1+)-mediated and its maintenance is regulated through SOD1 activation. Requires Cu(2+) as cofactor. The cofactor is Zn(2+). In terms of processing, ubiquitinion by XIAP/BIRC4 leads to enhancement of its chaperone activity toward its physiologic target, SOD1, rather than proteasomal degradation. XIAP/BIRC4 preferentially ubiquitinates at Lys-241. As to expression, ubiquitous.

It localises to the cytoplasm. Functionally, delivers copper to copper zinc superoxide dismutase (SOD1). The sequence is that of Copper chaperone for superoxide dismutase from Homo sapiens (Human).